The following is a 370-amino-acid chain: Cyclic dehypoxanthine futalosine synthase (370 aa).

A Radical SAM core domain is found at 50–295; sequence TTFVIGRNVN…QSSWVTMGPE (246 aa). [4Fe-4S] cluster-binding residues include cysteine 64, cysteine 68, and cysteine 71.

This sequence belongs to the radical SAM superfamily. MqnC family. [4Fe-4S] cluster serves as cofactor.

It catalyses the reaction dehypoxanthine futalosine + S-adenosyl-L-methionine = cyclic dehypoxanthinylfutalosinate + 5'-deoxyadenosine + L-methionine + H(+). It functions in the pathway quinol/quinone metabolism; menaquinone biosynthesis. Functionally, radical SAM enzyme that catalyzes the cyclization of dehypoxanthine futalosine (DHFL) into cyclic dehypoxanthine futalosine (CDHFL), a step in the biosynthesis of menaquinone (MK, vitamin K2). In Halalkalibacterium halodurans (strain ATCC BAA-125 / DSM 18197 / FERM 7344 / JCM 9153 / C-125) (Bacillus halodurans), this protein is Cyclic dehypoxanthine futalosine synthase.